A 322-amino-acid polypeptide reads, in one-letter code: Protein-L-isoaspartate O-methyltransferase (322 aa).

Residues 1-101 (MSGERAKRFP…AKQGDRSAAP (101 aa)) form a disordered region. Residues 14–29 (EDLKREPRKPEGRVAE) are compositionally biased toward basic and acidic residues. Low complexity-rich tracts occupy residues 33–51 (AGDA…PAAA) and 76–91 (HAPA…PQGG). Ser-170 is an active-site residue.

It belongs to the methyltransferase superfamily. L-isoaspartyl/D-aspartyl protein methyltransferase family.

The protein localises to the cytoplasm. It catalyses the reaction [protein]-L-isoaspartate + S-adenosyl-L-methionine = [protein]-L-isoaspartate alpha-methyl ester + S-adenosyl-L-homocysteine. Functionally, catalyzes the methyl esterification of L-isoaspartyl residues in peptides and proteins that result from spontaneous decomposition of normal L-aspartyl and L-asparaginyl residues. It plays a role in the repair and/or degradation of damaged proteins. This Burkholderia mallei (strain NCTC 10247) protein is Protein-L-isoaspartate O-methyltransferase.